The sequence spans 93 residues: Small ribosomal subunit protein uS19 (93 aa).

Belongs to the universal ribosomal protein uS19 family.

Protein S19 forms a complex with S13 that binds strongly to the 16S ribosomal RNA. The protein is Small ribosomal subunit protein uS19 (rpsS) of Helicobacter pylori (strain ATCC 700392 / 26695) (Campylobacter pylori).